We begin with the raw amino-acid sequence, 214 residues long: Uracil phosphoribosyltransferase (214 aa).

5-phospho-alpha-D-ribose 1-diphosphate-binding positions include Arg-81, Arg-106, and 133–141 (DPMLATGNS). Residues Ile-196 and 201–203 (GDA) each bind uracil. Asp-202 serves as a coordination point for 5-phospho-alpha-D-ribose 1-diphosphate.

The protein belongs to the UPRTase family. Requires Mg(2+) as cofactor.

It catalyses the reaction UMP + diphosphate = 5-phospho-alpha-D-ribose 1-diphosphate + uracil. It participates in pyrimidine metabolism; UMP biosynthesis via salvage pathway; UMP from uracil: step 1/1. With respect to regulation, allosterically activated by GTP. In terms of biological role, catalyzes the conversion of uracil and 5-phospho-alpha-D-ribose 1-diphosphate (PRPP) to UMP and diphosphate. The protein is Uracil phosphoribosyltransferase of Legionella pneumophila subsp. pneumophila (strain Philadelphia 1 / ATCC 33152 / DSM 7513).